The following is a 154-amino-acid chain: uncharacterized protein (154 aa).

It is found in the mitochondrion. This is an uncharacterized protein from Vicia faba (Broad bean).